The following is a 135-amino-acid chain: Nucleoside diphosphate kinase (135 aa).

Residues K10, F58, R86, T92, R103, and N113 each coordinate ATP. Catalysis depends on H116, which acts as the Pros-phosphohistidine intermediate.

It belongs to the NDK family. In terms of assembly, homotetramer. Mg(2+) serves as cofactor.

It localises to the cytoplasm. It catalyses the reaction a 2'-deoxyribonucleoside 5'-diphosphate + ATP = a 2'-deoxyribonucleoside 5'-triphosphate + ADP. It carries out the reaction a ribonucleoside 5'-diphosphate + ATP = a ribonucleoside 5'-triphosphate + ADP. Major role in the synthesis of nucleoside triphosphates other than ATP. The ATP gamma phosphate is transferred to the NDP beta phosphate via a ping-pong mechanism, using a phosphorylated active-site intermediate. The protein is Nucleoside diphosphate kinase of Nocardioides sp. (strain ATCC BAA-499 / JS614).